Consider the following 657-residue polypeptide: Glycogen debranching enzyme (657 aa).

D336 serves as the catalytic Nucleophile. E371 (proton donor) is an active-site residue. Basic and acidic residues predominate over residues 458–467; the sequence is NEANGEENRD. A disordered region spans residues 458-479; that stretch reads NEANGEENRDGTNNNYSNNHGK.

It belongs to the glycosyl hydrolase 13 family.

The catalysed reaction is Hydrolysis of (1-&gt;6)-alpha-D-glucosidic linkages to branches with degrees of polymerization of three or four glucose residues in limit dextrin.. It functions in the pathway glycan degradation; glycogen degradation. Its function is as follows. Removes maltotriose and maltotetraose chains that are attached by 1,6-alpha-linkage to the limit dextrin main chain, generating a debranched limit dextrin. This chain is Glycogen debranching enzyme, found in Escherichia coli (strain SE11).